A 57-amino-acid chain; its full sequence is Large ribosomal subunit protein bL33 (57 aa).

This sequence belongs to the bacterial ribosomal protein bL33 family.

The polypeptide is Large ribosomal subunit protein bL33 (Shewanella denitrificans (strain OS217 / ATCC BAA-1090 / DSM 15013)).